We begin with the raw amino-acid sequence, 374 residues long: DNA replication and repair protein RecF (374 aa).

30–37 serves as a coordination point for ATP; that stretch reads GHNAQGKT.

The protein belongs to the RecF family.

It is found in the cytoplasm. In terms of biological role, the RecF protein is involved in DNA metabolism; it is required for DNA replication and normal SOS inducibility. RecF binds preferentially to single-stranded, linear DNA. It also seems to bind ATP. The sequence is that of DNA replication and repair protein RecF from Limosilactobacillus reuteri (strain DSM 20016) (Lactobacillus reuteri).